Consider the following 789-residue polypeptide: MANILRKWIESDRRELRRINRLANRVDSYQDQMAKLTDDELKAKTPEFRQRIQDGEDLDHLLPEAFAVAREGAKRVLGLFPFHVQVMGGIVLHEGNIAEMKTGEGKTLTATMPVYLNALSGKGVHVITVNEYLSERDAEEMGQLYRWLGCSVGVNGAQKSPDEKRAAYACDIMYSTNSEIGFDYLRDNMAVYKEDQVQRGLNFAIVDEVDSILIDEARTPLIISGPGTGTSKLYQQADRFVKTLKNEDDYKIDLESKTVSLTDEGIKKAEKYFNLKNLYDPENTALTHHLDQSLRANYIMLLDKDYVVNDGEVLIVDSFTGRVMEGRRFSDGLHQAIEAKEGVEIQEENKTMANITYQNLFRMYSKLAGMTGTARTEMEEFREIYNMETITIPTNRPVARVDEPDLLYPTLESKFRAVVKRIQALHEKGQPVLVGTVAVETSEYLSHLLDQQKIPHVVLNAKNHAREAEIIKNAGQVGAVTIATNMAGRGTDIKLGPGVKELGGLAVIGTERHESRRIDNQLRGRSGRQGDPGLSQFYLSLEDELMKRFGGDRIKNFLQRLQTDDDDEDVVIKSRFLTHQVESAQKRVEGNNYDSRKNVLQYDDVMREQREIIYRERQQVITEIDSLKWVLMPMVKRTIQRAIDAHTLGDKKDWKLQEIVDFAVEVLVKPDQITVGMLEGKSKDEMVDLMMDFAEQVYEEKKHQLYDDSQMLEFEKVVILRVVDAHWTDHIDAMDQFRQSVGLRGYGQQNPLVEYQTTGYRMFEQMVADIEYETTRLFMKSEIRQNVTR.

ATP contacts are provided by residues glutamine 85, 103 to 107 (GEGKT), and aspartate 492.

This sequence belongs to the SecA family. In terms of assembly, monomer and homodimer. Part of the essential Sec protein translocation apparatus which comprises SecA, SecYEG and auxiliary proteins SecDF. Other proteins may also be involved.

It is found in the cell membrane. It localises to the cytoplasm. It carries out the reaction ATP + H2O + cellular proteinSide 1 = ADP + phosphate + cellular proteinSide 2.. Part of the Sec protein translocase complex. Interacts with the SecYEG preprotein conducting channel. Has a central role in coupling the hydrolysis of ATP to the transfer of proteins into and across the cell membrane, serving as an ATP-driven molecular motor driving the stepwise translocation of polypeptide chains across the membrane. In Limosilactobacillus fermentum (strain NBRC 3956 / LMG 18251) (Lactobacillus fermentum), this protein is Protein translocase subunit SecA.